A 561-amino-acid chain; its full sequence is Putative transport protein YbjL (561 aa).

A run of 5 helical transmembrane segments spans residues 8 to 28 (LLNGNYILLLFVVLALGLCLG), 32 to 52 (LGSVQLGNSIGVLVVSLLLGQ), 66 to 86 (FMLFIFCVGVEAGPNFFSIFF), 94 to 114 (MLALVMVGSALLIALGLGKLF), and 158 to 178 (NLSLGYALTYLIGLVSLIVGA). RCK C-terminal domains are found at residues 200–288 (RGLD…SFRN) and 292–373 (VFDR…RIGF). Helical transmembrane passes span 383–403 (LLAFCAFFIIGLMIGMITFQF), 406–426 (FSFGIGNAAGLLFAGIMLGFL), 447–467 (FGLMVFMAGVGLSAGSGISNG), 475–495 (MLIAGLVVSLIPVVICFLFGA), and 540–560 (AIANVLLTLAGTLIVIIWPGL).

This sequence belongs to the AAE transporter (TC 2.A.81) family. YbjL subfamily.

The protein localises to the cell membrane. The sequence is that of Putative transport protein YbjL from Salmonella typhi.